A 429-amino-acid chain; its full sequence is Glycogenin-1 (429 aa).

UDP-binding residues include L8, T10, N11, Y14, and R76. UDP-alpha-D-glucose is bound by residues L8, T10, N11, Y14, R76, K85, D101, A102, D103, N132, S133, D159, D162, and Q163. 3 residues coordinate UDP: D101, A102, and D103. D101 lines the Mn(2+) pocket. D103 is a binding site for Mn(2+). O-linked (Glc...) tyrosine glycosylation is present at Y194. UDP is bound by residues H211, G214, and K217. A Mn(2+)-binding site is contributed by H211. 2 residues coordinate UDP-alpha-D-glucose: G214 and K217. Disordered regions lie at residues 254-274 (VFPS…HPKI) and 300-338 (SYDT…QTPH). 2 stretches are compositionally biased toward basic and acidic residues: residues 263–274 (EHRSHSADHPKI) and 309–338 (DSHR…QTPH).

The protein belongs to the glycosyltransferase 8 family. Glycogenin subfamily. Forms a heterooctamer with one molecule of gyg-1 bound to each protomer of the gys-1 homotetramer. The N-terminus of gys-1 is involved in interprotomer contacts with gyg-1. The interaction with gys-1 is required for glycogen production but is not required for gys-1 intrinsic activity. Requires Mn(2+) as cofactor. In terms of processing, self-glycosylated by the transfer of glucose residues from UDP-glucose to itself, forming an alpha-1,4-glycan of around 10 residues attached to Tyr-194.

It is found in the cytoplasm. The protein localises to the nucleus. The catalysed reaction is L-tyrosyl-[glycogenin] + UDP-alpha-D-glucose = alpha-D-glucosyl-L-tyrosyl-[glycogenin] + UDP + H(+). The enzyme catalyses [1,4-alpha-D-glucosyl](n)-L-tyrosyl-[glycogenin] + UDP-alpha-D-glucose = [1,4-alpha-D-glucosyl](n+1)-L-tyrosyl-[glycogenin] + UDP + H(+). It participates in glycan biosynthesis; glycogen biosynthesis. Self-glucosylating initiator of glycogen synthesis. It catalyzes the formation of a short alpha (1,4)-glucosyl chain covalently attached via a glucose 1-O-tyrosyl linkage to internal tyrosine residues and these chains act as primers for the elongation reaction catalyzed by glycogen synthase. The polypeptide is Glycogenin-1 (Caenorhabditis elegans).